The primary structure comprises 336 residues: Ketol-acid reductoisomerase (NADP(+)) (336 aa).

The region spanning 1-181 (MKVYYDQDAD…GGGRSGIIET (181 aa)) is the KARI N-terminal Rossmann domain. Residues 24-27 (YGSQ), Arg-47, Ser-50, and Ser-52 each bind NADP(+). The active site involves His-107. Gly-133 is a binding site for NADP(+). Residues 182 to 327 (SFREETETDL…ERLRGMMPWI (146 aa)) form the KARI C-terminal knotted domain. Residues Asp-190, Glu-194, Glu-226, and Glu-230 each coordinate Mg(2+). Ser-251 is a substrate binding site.

Belongs to the ketol-acid reductoisomerase family. Requires Mg(2+) as cofactor.

It catalyses the reaction (2R)-2,3-dihydroxy-3-methylbutanoate + NADP(+) = (2S)-2-acetolactate + NADPH + H(+). The catalysed reaction is (2R,3R)-2,3-dihydroxy-3-methylpentanoate + NADP(+) = (S)-2-ethyl-2-hydroxy-3-oxobutanoate + NADPH + H(+). It participates in amino-acid biosynthesis; L-isoleucine biosynthesis; L-isoleucine from 2-oxobutanoate: step 2/4. Its pathway is amino-acid biosynthesis; L-valine biosynthesis; L-valine from pyruvate: step 2/4. Functionally, involved in the biosynthesis of branched-chain amino acids (BCAA). Catalyzes an alkyl-migration followed by a ketol-acid reduction of (S)-2-acetolactate (S2AL) to yield (R)-2,3-dihydroxy-isovalerate. In the isomerase reaction, S2AL is rearranged via a Mg-dependent methyl migration to produce 3-hydroxy-3-methyl-2-ketobutyrate (HMKB). In the reductase reaction, this 2-ketoacid undergoes a metal-dependent reduction by NADPH to yield (R)-2,3-dihydroxy-isovalerate. This Halorhodospira halophila (strain DSM 244 / SL1) (Ectothiorhodospira halophila (strain DSM 244 / SL1)) protein is Ketol-acid reductoisomerase (NADP(+)).